A 187-amino-acid chain; its full sequence is Holliday junction resolvase (187 aa).

The protein belongs to the RuvC family. Poxviruses-type subfamily. It depends on Mg(2+) as a cofactor. Post-translationally, acylated by palmitic acid group(s).

The protein localises to the membrane. Its function is as follows. Nuclease that specifically cleaves and resolves four-way DNA Holliday junctions into linear duplex products. In Vaccinia virus (strain Ankara) (VACV), this protein is Holliday junction resolvase.